A 442-amino-acid polypeptide reads, in one-letter code: MASSASMLINYPTTFCGVRNSSNPNNDQFSDQINIPSSLNNNINISKITSKTNKIIPKAVASPVIPSSINSNNITTTTPNIKRIIHEFDPKVPAEDGFTPPSTWYTDPSLYSHELDRIFSKGWQVAGYSDQIKEPNQYFTGSLGNVEYLVCRDGQGKVHAFHNVCTHRASILACGTGKKSCFVCPYHGWVFGLDGSLMKATKTENQVFDPKELGLVTLKVAIWGPFVLISLDRSGSEGTEDVGKEWIGSCAEEVKKHAFDPSLQFINRSEFPMESNWKVFCDNYLDSAYHVPYAHKYYAAELDFDTYKTDLLEKVVIQRVASSSNKPNGFDRLGSEAFYAFIYPNFAVERYGPWMTTMHIGPLGPRKCKLVVDYYLENAMMNDKPYIEKSIMINDNVQKEDVVLCESVQRGLETPAYRSGRYVMPIEKGIHHFHCWLHQTLN.

The N-terminal 58 residues, methionine 1 to lysine 58, are a transit peptide targeting the chloroplast. The 107-residue stretch at tryptophan 123 to isoleucine 229 folds into the Rieske domain. [2Fe-2S] cluster is bound by residues cysteine 165, histidine 167, cysteine 184, and histidine 187. Residues histidine 290 and histidine 295 each contribute to the Fe cation site.

Belongs to the choline monooxygenase family. The cofactor is [2Fe-2S] cluster. Fe cation serves as cofactor. Requires Mg(2+) as cofactor.

It localises to the plastid. Its subcellular location is the chloroplast stroma. The catalysed reaction is choline + 2 reduced [2Fe-2S]-[ferredoxin] + O2 + 2 H(+) = betaine aldehyde hydrate + 2 oxidized [2Fe-2S]-[ferredoxin] + H2O. The protein operates within amine and polyamine biosynthesis; betaine biosynthesis via choline pathway; betaine aldehyde from choline (monooxygenase route): step 1/1. Catalyzes the first step of the osmoprotectant glycine betaine synthesis. This Amaranthus tricolor (Joseph's coat) protein is Choline monooxygenase, chloroplastic (CMO).